Consider the following 202-residue polypeptide: Small ribosomal subunit protein uS4 (202 aa).

Residues 21–42 form a disordered region; sequence LSRKSPRRAYPPGQHGQARRKR. The region spanning 90–152 is the S4 RNA-binding domain; it reads MRLDNTVFRL…DRSRKLVETN (63 aa).

This sequence belongs to the universal ribosomal protein uS4 family. In terms of assembly, part of the 30S ribosomal subunit. Contacts protein S5. The interaction surface between S4 and S5 is involved in control of translational fidelity.

Its function is as follows. One of the primary rRNA binding proteins, it binds directly to 16S rRNA where it nucleates assembly of the body of the 30S subunit. In terms of biological role, with S5 and S12 plays an important role in translational accuracy. The sequence is that of Small ribosomal subunit protein uS4 from Synechocystis sp. (strain ATCC 27184 / PCC 6803 / Kazusa).